A 116-amino-acid chain; its full sequence is Putative iron-sulfur cluster insertion protein ErpA (116 aa).

Residues cysteine 44, cysteine 108, and cysteine 110 each coordinate iron-sulfur cluster.

Belongs to the HesB/IscA family. Homodimer. It depends on iron-sulfur cluster as a cofactor.

Required for insertion of 4Fe-4S clusters. This chain is Putative iron-sulfur cluster insertion protein ErpA, found in Thiobacillus denitrificans (strain ATCC 25259 / T1).